Reading from the N-terminus, the 188-residue chain is Putative manganese efflux pump MntP (188 aa).

A run of 6 helical transmembrane segments spans residues 8 to 28 (CLGL…GFVI), 39 to 59 (IALF…LTGL), 68 to 88 (IDHW…IYEA), 106 to 126 (LLAL…GLSL), 131 to 151 (ILLP…IGVF), and 164 to 184 (IEII…IEDL).

It belongs to the MntP (TC 9.B.29) family.

The protein resides in the cell inner membrane. Its function is as follows. Probably functions as a manganese efflux pump. The sequence is that of Putative manganese efflux pump MntP from Crocosphaera subtropica (strain ATCC 51142 / BH68) (Cyanothece sp. (strain ATCC 51142)).